The primary structure comprises 138 residues: Basic leucine zipper 8 (138 aa).

The disordered stretch occupies residues 30-67 (NLPATSDDSSRTAEDNERKRRRKVSNRESARRSRMRKQ). Basic and acidic residues predominate over residues 37-47 (DSSRTAEDNER). In terms of domain architecture, bZIP spans 45 to 108 (NERKRRRKVS…EKVIEENMKL (64 aa)). The interval 47–68 (RKRRRKVSNRESARRSRMRKQR) is basic motif. The short motif at 48-55 (KRRRKVSN) is the Nuclear localization signal element. The interval 73 to 87 (LWSMLVQLINKNKSL) is leucine-zipper.

Belongs to the bZIP family. Homodimer.

The protein resides in the nucleus. The sequence is that of Basic leucine zipper 8 from Arabidopsis thaliana (Mouse-ear cress).